Reading from the N-terminus, the 290-residue chain is N-acetylmannosamine kinase (290 aa).

ATP contacts are provided by residues alanine 5–lysine 12 and glycine 132–serine 139. Zn(2+) contacts are provided by histidine 156, cysteine 166, cysteine 168, and cysteine 173.

This sequence belongs to the ROK (NagC/XylR) family. NanK subfamily. Homodimer.

It catalyses the reaction an N-acyl-D-mannosamine + ATP = an N-acyl-D-mannosamine 6-phosphate + ADP + H(+). Its pathway is amino-sugar metabolism; N-acetylneuraminate degradation; D-fructose 6-phosphate from N-acetylneuraminate: step 2/5. Its function is as follows. Catalyzes the phosphorylation of N-acetylmannosamine (ManNAc) to ManNAc-6-P. This chain is N-acetylmannosamine kinase, found in Citrobacter koseri (strain ATCC BAA-895 / CDC 4225-83 / SGSC4696).